The primary structure comprises 299 residues: Ig alpha chain C region (299 aa).

Ig-like domains lie at 71 to 167 (PSLS…ATIS) and 174 to 276 (PQVH…KTID).

Its function is as follows. Ig alpha is the major immunoglobulin class in body secretions. It may serve both to defend against local infection and to prevent access of foreign antigens to the general immunologic system. The chain is Ig alpha chain C region from Oryctolagus cuniculus (Rabbit).